The primary structure comprises 201 residues: FMN-dependent NADH:quinone oxidoreductase (201 aa).

FMN contacts are provided by residues Ser-10, 16 to 18 (SQS), 96 to 99 (MYNF), and 140 to 143 (SRGG).

This sequence belongs to the azoreductase type 1 family. Homodimer. FMN is required as a cofactor.

The enzyme catalyses 2 a quinone + NADH + H(+) = 2 a 1,4-benzosemiquinone + NAD(+). It catalyses the reaction N,N-dimethyl-1,4-phenylenediamine + anthranilate + 2 NAD(+) = 2-(4-dimethylaminophenyl)diazenylbenzoate + 2 NADH + 2 H(+). In terms of biological role, quinone reductase that provides resistance to thiol-specific stress caused by electrophilic quinones. Also exhibits azoreductase activity. Catalyzes the reductive cleavage of the azo bond in aromatic azo compounds to the corresponding amines. In Salmonella arizonae (strain ATCC BAA-731 / CDC346-86 / RSK2980), this protein is FMN-dependent NADH:quinone oxidoreductase.